The sequence spans 323 residues: Putative divalent cation/proton antiporter TMEM165 (323 aa).

An N-terminal signal peptide occupies residues 1–33; that stretch reads MAAAARGSGRAPTRRLLVLLLLQLLWAPAGVRA. Residues 34-89 are Lumenal-facing; that stretch reads GPEEDLSHRNQEPPAPAQQLQPQPAAVQGLEPARAEKGLTPVAPVHTNKEDAAAQT. Residues 35 to 44 are compositionally biased toward basic and acidic residues; the sequence is PEEDLSHRNQ. Residues 35-60 are disordered; sequence PEEDLSHRNQEPPAPAQQLQPQPAAV. Positions 50 to 59 are enriched in low complexity; it reads AQQLQPQPAA. Residues 90–110 traverse the membrane as a helical segment; it reads NLGFIHAFVAAISVIIVSELG. At 111–126 the chain is on the cytoplasmic side; it reads DKTFFIAAIMAMRYNR. The chain crosses the membrane as a helical span at residues 127–147; the sequence is LTVLAGAMLALALMTCLSVLF. Residues 148-151 lie on the Lumenal side of the membrane; that stretch reads GYAT. A helical transmembrane segment spans residues 152–172; the sequence is TVIPRVYTYYVSTALFAIFGI. Over 173–227 the chain is Cytoplasmic; the sequence is RMLREGLKMSPDEGQEELEEVQAELKKKDEEFQRTKLLNGPDVETGTSTAIPQKK. Residues 184-211 are a coiled coil; it reads DEGQEELEEVQAELKKKDEEFQRTKLLN. Residues 228-248 traverse the membrane as a helical segment; the sequence is WLHFISPIFVQALTLTFLAEW. The Lumenal segment spans residues 249 to 266; that stretch reads GDRSQLTTIVLAAREDPY. Residues 267–287 form a helical membrane-spanning segment; it reads GVAVGGTVGHCLCTGLAVIGG. Residues 288–298 are Cytoplasmic-facing; it reads RMIAQKISVRT. The helical transmembrane segment at 299–319 threads the bilayer; it reads VTIIGGIVFLAFAFSALFISP. Topologically, residues 320-323 are lumenal; the sequence is ESGF.

This sequence belongs to the GDT1 family. Expressed in mammary epithelial cells (at protein level).

It localises to the golgi apparatus membrane. The enzyme catalyses Ca(2+)(in) + n H(+)(out) = Ca(2+)(out) + n H(+)(in). It carries out the reaction Mn(2+)(in) + n H(+)(out) = Mn(2+)(out) + n H(+)(in). Its function is as follows. Putative divalent cation:proton antiporter that exchanges calcium or manganese ions for protons across the Golgi membrane. Mediates the reversible transport of calcium or manganese to the Golgi lumen driven by the proton gradient and possibly the membrane potential generated by V-ATPase. Provides calcium or manganese cofactors to resident Golgi enzymes and contributes to the maintenance of an acidic luminal Golgi pH required for proper functioning of the secretory pathway. Promotes Ca(2+) storage within the Golgi lumen of the mammary epithelial cells to be then secreted into milk. The transport mechanism and stoichiometry remains to be elucidated. This chain is Putative divalent cation/proton antiporter TMEM165, found in Mus musculus (Mouse).